We begin with the raw amino-acid sequence, 908 residues long: MSNNKIIESLAILYLNNYINDNDIYSLSLINREFHINIIKDDYFYSTINKNYLFLYIKIFKLLSIKVKLNPNWINIINNNNNINNNNNNNNNNNNNNNNNNNNKIKLIKNNFSVISERLNFLIQCKFNLHRYLDNNDLFITILRGEKLSTLDRIICFSIIYSQDQILLFLLNFILSNINCNNNNNNNNNNNNNNNNNNISNISNSNRLLANNSYNIQFNQQIPTQNELINLNKCLQFSTSTTTTTTTTMVPPFNENILKVYPIYFAIVKVIGGGSLVRFLLSILPNVYNITNVNCKLPITNRSALFYSTTREMTLLLLQLGCNIHDMDYKGMLPIHYHSLNGHVDVVKCLIDDSTINALDQSNNTPLNLASLSGNLSLAKILLNSGARLSIDNLNGRYPIHNACVNGNIDLIRYFLELYSKMNSTTLLPSTTTTTTTTTTTMTTTTTTAITTTTATTIQNNSNNLTNSNSSSVGGLRISNGGNTQQQSIQIPDKENNTPIDLLVLNNHFTIAIELLKYEGYIVGKEEFNFKTARKIGAGAFGDVYLVEWRNKNVAVKRVKIEKILESGKSYQWIRDKFILEAVLMVKLSNFSSFVKLYATCIEEKELLLVLEFCDNGSLYTILNTIPIGGAGANNNNNNNNNNDIIQSLPSINTLSLNIANGMNYLHSLKPQIIHRDLTSQNILIDRNGIAKIADFGISRFKNDIGDKTMTSIGNPRFRSPEVTKGQKYSEKVDVFGFGMILYEMFTRRVPFHDYEQIAASFKIANAERPPLPQTIDHRWSNLIQICWDQNPNNRPSFDQILTIIQNLPIANIPKFLVPLQQNQNQIQNQNQNQNQNNGKLDLSTSSSSITNLNNAVTAKLSLSTSGGLFSGDSDYTVGTCSGYDIGYDNDGDIIDYSSDQNDSDLYD.

Over 1–153 the chain is Extracellular; that stretch reads MSNNKIIESL…RGEKLSTLDR (153 aa). Residues 154–174 traverse the membrane as a helical segment; it reads IICFSIIYSQDQILLFLLNFI. Residues 175–908 are Cytoplasmic-facing; it reads LSNINCNNNN…SDQNDSDLYD (734 aa). 5 ANK repeats span residues 258–289, 300–326, 330–361, 362–391, and 395–424; these read LKVYPIYFAIVKVIGGGSLVRFLLSILPNVYN, TNRSALFYSTTREMTLLLLQLGCNIHD, KGMLPIHYHSLNGHVDVVKCLIDDSTINALDQ, SNNTPLNLASLSGNLSLAKILLNSGARLSI, and NGRYPIHNACVNGNIDLIRYFLELYSKMNS. Residues 461 to 472 are compositionally biased toward low complexity; the sequence is NSNNLTNSNSSS. The tract at residues 461–491 is disordered; that stretch reads NSNNLTNSNSSSVGGLRISNGGNTQQQSIQI. The span at 480–490 shows a compositional bias: polar residues; the sequence is NGGNTQQQSIQ. One copy of the ANK 6 repeat lies at 495-524; sequence ENNTPIDLLVLNNHFTIAIELLKYEGYIVG. One can recognise a Protein kinase domain in the interval 530-817; the sequence is FKTARKIGAG…LPIANIPKFL (288 aa). Residues 536-544 and Lys-557 contribute to the ATP site; that span reads IGAGAFGDV. The Proton acceptor role is filled by Asp-677.

This sequence belongs to the protein kinase superfamily. TKL Ser/Thr protein kinase family.

Its subcellular location is the membrane. The catalysed reaction is L-seryl-[protein] + ATP = O-phospho-L-seryl-[protein] + ADP + H(+). It carries out the reaction L-threonyl-[protein] + ATP = O-phospho-L-threonyl-[protein] + ADP + H(+). The polypeptide is Probable serine/threonine-protein kinase DDB_G0278521 (Dictyostelium discoideum (Social amoeba)).